A 455-amino-acid chain; its full sequence is L-serine dehydratase 2 (455 aa).

It belongs to the iron-sulfur dependent L-serine dehydratase family. It depends on [4Fe-4S] cluster as a cofactor. In terms of processing, activated by post-translational modification by a system involving at least three gene products. Activation is mimicked in vitro by iron and dithiothreitol. There is considerable evidence for a free-radical activation mechanism.

The enzyme catalyses L-serine = pyruvate + NH4(+). It functions in the pathway carbohydrate biosynthesis; gluconeogenesis. Also deaminates threonine, particularly when it is present in high concentration. The protein is L-serine dehydratase 2 (sdaB) of Escherichia coli (strain K12).